An 89-amino-acid chain; its full sequence is Small ribosomal subunit protein uS14A (89 aa).

It belongs to the universal ribosomal protein uS14 family. Part of the 30S ribosomal subunit. Contacts proteins S3 and S10.

Its function is as follows. Binds 16S rRNA, required for the assembly of 30S particles and may also be responsible for determining the conformation of the 16S rRNA at the A site. The chain is Small ribosomal subunit protein uS14A from Bacillus pumilus (strain SAFR-032).